Reading from the N-terminus, the 201-residue chain is 3-isopropylmalate dehydratase small subunit (201 aa).

The protein belongs to the LeuD family. LeuD type 1 subfamily. Heterodimer of LeuC and LeuD.

The catalysed reaction is (2R,3S)-3-isopropylmalate = (2S)-2-isopropylmalate. Its pathway is amino-acid biosynthesis; L-leucine biosynthesis; L-leucine from 3-methyl-2-oxobutanoate: step 2/4. In terms of biological role, catalyzes the isomerization between 2-isopropylmalate and 3-isopropylmalate, via the formation of 2-isopropylmaleate. This Ruegeria pomeroyi (strain ATCC 700808 / DSM 15171 / DSS-3) (Silicibacter pomeroyi) protein is 3-isopropylmalate dehydratase small subunit.